A 459-amino-acid polypeptide reads, in one-letter code: Exodeoxyribonuclease 7 large subunit (459 aa).

It belongs to the XseA family. In terms of assembly, heterooligomer composed of large and small subunits.

The protein localises to the cytoplasm. It catalyses the reaction Exonucleolytic cleavage in either 5'- to 3'- or 3'- to 5'-direction to yield nucleoside 5'-phosphates.. Bidirectionally degrades single-stranded DNA into large acid-insoluble oligonucleotides, which are then degraded further into small acid-soluble oligonucleotides. This Yersinia pseudotuberculosis serotype IB (strain PB1/+) protein is Exodeoxyribonuclease 7 large subunit.